The sequence spans 268 residues: GTP cyclohydrolase FolE2 (268 aa).

The protein belongs to the GTP cyclohydrolase IV family.

It catalyses the reaction GTP + H2O = 7,8-dihydroneopterin 3'-triphosphate + formate + H(+). Its pathway is cofactor biosynthesis; 7,8-dihydroneopterin triphosphate biosynthesis; 7,8-dihydroneopterin triphosphate from GTP: step 1/1. Functionally, converts GTP to 7,8-dihydroneopterin triphosphate. This is GTP cyclohydrolase FolE2 from Janthinobacterium sp. (strain Marseille) (Minibacterium massiliensis).